The following is a 516-amino-acid chain: Solute carrier family 49 member A3 (516 aa).

A compositionally biased stretch (basic and acidic residues) spans 1–10 (MAGTMDRLED). Residues 1–22 (MAGTMDRLEDCNSPETSGTAGD) are disordered. 12 consecutive transmembrane segments (helical) span residues 34–54 (WVFL…WLSF), 74–94 (WLSL…IWVL), 104–124 (ILGA…CLPV), 139–159 (LCAL…ALWF), 170–190 (ISTM…PALV), 199–219 (MLGI…VCLW), 253–273 (VLLA…SALL), 289–309 (LCGA…GLYV), 321–341 (IGLC…QLQG), 344–364 (LALA…APVV), 382–402 (GLIF…LTAL), and 425–445 (VSLL…VIFF). The disordered stretch occupies residues 453–516 (EAESGGSSSP…EWAETMPRDV (64 aa)). Basic and acidic residues predominate over residues 504-516 (GHSEWAETMPRDV).

Belongs to the major facilitator superfamily.

It localises to the membrane. This chain is Solute carrier family 49 member A3 (Slc49a3), found in Mus musculus (Mouse).